A 178-amino-acid polypeptide reads, in one-letter code: ATP synthase subunit delta (178 aa).

This sequence belongs to the ATPase delta chain family. As to quaternary structure, F-type ATPases have 2 components, F(1) - the catalytic core - and F(0) - the membrane proton channel. F(1) has five subunits: alpha(3), beta(3), gamma(1), delta(1), epsilon(1). F(0) has three main subunits: a(1), b(2) and c(10-14). The alpha and beta chains form an alternating ring which encloses part of the gamma chain. F(1) is attached to F(0) by a central stalk formed by the gamma and epsilon chains, while a peripheral stalk is formed by the delta and b chains.

It localises to the cell inner membrane. F(1)F(0) ATP synthase produces ATP from ADP in the presence of a proton or sodium gradient. F-type ATPases consist of two structural domains, F(1) containing the extramembraneous catalytic core and F(0) containing the membrane proton channel, linked together by a central stalk and a peripheral stalk. During catalysis, ATP synthesis in the catalytic domain of F(1) is coupled via a rotary mechanism of the central stalk subunits to proton translocation. Its function is as follows. This protein is part of the stalk that links CF(0) to CF(1). It either transmits conformational changes from CF(0) to CF(1) or is implicated in proton conduction. This is ATP synthase subunit delta from Nitrosococcus oceani (strain ATCC 19707 / BCRC 17464 / JCM 30415 / NCIMB 11848 / C-107).